A 420-amino-acid polypeptide reads, in one-letter code: 3-isopropylmalate dehydratase large subunit (420 aa).

The [4Fe-4S] cluster site is built by Cys-300, Cys-360, and Cys-363.

This sequence belongs to the aconitase/IPM isomerase family. LeuC type 2 subfamily. As to quaternary structure, heterodimer of LeuC and LeuD. Requires [4Fe-4S] cluster as cofactor.

The enzyme catalyses (2R,3S)-3-isopropylmalate = (2S)-2-isopropylmalate. The protein operates within amino-acid biosynthesis; L-leucine biosynthesis; L-leucine from 3-methyl-2-oxobutanoate: step 2/4. Functionally, catalyzes the isomerization between 2-isopropylmalate and 3-isopropylmalate, via the formation of 2-isopropylmaleate. The chain is 3-isopropylmalate dehydratase large subunit from Clostridium kluyveri (strain ATCC 8527 / DSM 555 / NBRC 12016 / NCIMB 10680 / K1).